Here is a 336-residue protein sequence, read N- to C-terminus: Mitochondrial thiamine pyrophosphate carrier 1 (336 aa).

Solcar repeat units follow at residues 11–98, 112–202, and 221–323; these read ISST…VNQV, SSGA…VKDS, and TKGW…SLSI. 6 helical membrane passes run 17–37, 66–86, 118–138, 177–197, 228–244, and 298–315; these read MLCGGIAGMVSRFCIAPLDVV, GVTALWKGNIPAELLYVFYGA, FIAGATAGAGATIATYPFDLF, GVSSSIISIAPYMGLFFASYG, TAGLCAGTASKALVFPL, and GFLVSLIKSAPTSAITMY.

It belongs to the mitochondrial carrier (TC 2.A.29) family.

It localises to the mitochondrion inner membrane. Its function is as follows. Mitochondrial transporter that mediates uptake of thiamine pyrophosphate (ThPP) into mitochondria. In Yarrowia lipolytica (strain CLIB 122 / E 150) (Yeast), this protein is Mitochondrial thiamine pyrophosphate carrier 1 (TPC1).